The primary structure comprises 197 residues: Adenylyl-sulfate kinase (197 aa).

An ATP-binding site is contributed by 33 to 40 (GLSGSGKS). S107 serves as the catalytic Phosphoserine intermediate.

This sequence belongs to the APS kinase family.

It carries out the reaction adenosine 5'-phosphosulfate + ATP = 3'-phosphoadenylyl sulfate + ADP + H(+). The protein operates within sulfur metabolism; hydrogen sulfide biosynthesis; sulfite from sulfate: step 2/3. Functionally, catalyzes the synthesis of activated sulfate. The chain is Adenylyl-sulfate kinase from Bacillus velezensis (strain DSM 23117 / BGSC 10A6 / LMG 26770 / FZB42) (Bacillus amyloliquefaciens subsp. plantarum).